A 28-amino-acid chain; its full sequence is Fibrinogen alpha chain (28 aa).

Residue S3 is modified to Phosphoserine.

As to quaternary structure, heterohexamer; disulfide linked. Contains 2 sets of 3 non-identical chains (alpha, beta and gamma). The 2 heterotrimers are in head to head conformation with the N-termini in a small central domain. In terms of processing, conversion of fibrinogen to fibrin is triggered by thrombin, which cleaves fibrinopeptides A and B from alpha and beta chains, and thus exposes the N-terminal polymerization sites responsible for the formation of the soft clot. The soft clot is converted into the hard clot by factor XIIIA which catalyzes the epsilon-(gamma-glutamyl)lysine cross-linking between gamma chains (stronger) and between alpha chains (weaker) of different monomers. Forms F13A-mediated cross-links between a glutamine and the epsilon-amino group of a lysine residue, forming fibronectin-fibrinogen heteropolymers.

The protein resides in the secreted. Functionally, cleaved by the protease thrombin to yield monomers which, together with fibrinogen beta (FGB) and fibrinogen gamma (FGG), polymerize to form an insoluble fibrin matrix. Fibrin has a major function in hemostasis as one of the primary components of blood clots. In addition, functions during the early stages of wound repair to stabilize the lesion and guide cell migration during re-epithelialization. Was originally thought to be essential for platelet aggregation, based on in vitro studies using anticoagulated blood. However, subsequent studies have shown that it is not absolutely required for thrombus formation in vivo. Enhances expression of SELP in activated platelets via an ITGB3-dependent pathway. Maternal fibrinogen is essential for successful pregnancy. Fibrin deposition is also associated with infection, where it protects against IFNG-mediated hemorrhage. May also facilitate the immune response via both innate and T-cell mediated pathways. The protein is Fibrinogen alpha chain (FGA) of Canis lupus familiaris (Dog).